The primary structure comprises 221 residues: Deoxyribose-phosphate aldolase (221 aa).

Asp90 functions as the Proton donor/acceptor in the catalytic mechanism. Lys152 (schiff-base intermediate with acetaldehyde) is an active-site residue. Lys181 serves as the catalytic Proton donor/acceptor.

The protein belongs to the DeoC/FbaB aldolase family. DeoC type 1 subfamily.

Its subcellular location is the cytoplasm. The enzyme catalyses 2-deoxy-D-ribose 5-phosphate = D-glyceraldehyde 3-phosphate + acetaldehyde. Its pathway is carbohydrate degradation; 2-deoxy-D-ribose 1-phosphate degradation; D-glyceraldehyde 3-phosphate and acetaldehyde from 2-deoxy-alpha-D-ribose 1-phosphate: step 2/2. Catalyzes a reversible aldol reaction between acetaldehyde and D-glyceraldehyde 3-phosphate to generate 2-deoxy-D-ribose 5-phosphate. The polypeptide is Deoxyribose-phosphate aldolase (Exiguobacterium sp. (strain ATCC BAA-1283 / AT1b)).